The chain runs to 333 residues: Biotin synthase (333 aa).

A Radical SAM core domain is found at 47 to 276 (ADIQRASLLS…KARVRLSAGR (230 aa)). Residues Cys62, Cys66, and Cys69 each contribute to the [4Fe-4S] cluster site. [2Fe-2S] cluster contacts are provided by Cys107, Cys139, Cys199, and Arg271.

Belongs to the radical SAM superfamily. Biotin synthase family. As to quaternary structure, homodimer. Requires [4Fe-4S] cluster as cofactor. It depends on [2Fe-2S] cluster as a cofactor.

It catalyses the reaction (4R,5S)-dethiobiotin + (sulfur carrier)-SH + 2 reduced [2Fe-2S]-[ferredoxin] + 2 S-adenosyl-L-methionine = (sulfur carrier)-H + biotin + 2 5'-deoxyadenosine + 2 L-methionine + 2 oxidized [2Fe-2S]-[ferredoxin]. Its pathway is cofactor biosynthesis; biotin biosynthesis; biotin from 7,8-diaminononanoate: step 2/2. Catalyzes the conversion of dethiobiotin (DTB) to biotin by the insertion of a sulfur atom into dethiobiotin via a radical-based mechanism. This is Biotin synthase from Methylobacterium nodulans (strain LMG 21967 / CNCM I-2342 / ORS 2060).